The primary structure comprises 90 residues: Probable Fe(2+)-trafficking protein (90 aa).

The protein belongs to the Fe(2+)-trafficking protein family.

Its function is as follows. Could be a mediator in iron transactions between iron acquisition and iron-requiring processes, such as synthesis and/or repair of Fe-S clusters in biosynthetic enzymes. This chain is Probable Fe(2+)-trafficking protein, found in Hydrogenovibrio crunogenus (strain DSM 25203 / XCL-2) (Thiomicrospira crunogena).